Reading from the N-terminus, the 337-residue chain is Ribosomal RNA small subunit methyltransferase C (337 aa).

Belongs to the methyltransferase superfamily. RsmC family. Monomer.

Its subcellular location is the cytoplasm. The enzyme catalyses guanosine(1207) in 16S rRNA + S-adenosyl-L-methionine = N(2)-methylguanosine(1207) in 16S rRNA + S-adenosyl-L-homocysteine + H(+). Specifically methylates the guanine in position 1207 of 16S rRNA in the 30S particle. The chain is Ribosomal RNA small subunit methyltransferase C from Proteus mirabilis (strain HI4320).